We begin with the raw amino-acid sequence, 158 residues long: Ribosome maturation factor RimP (158 aa).

The protein belongs to the RimP family.

Its subcellular location is the cytoplasm. In terms of biological role, required for maturation of 30S ribosomal subunits. The chain is Ribosome maturation factor RimP from Lactiplantibacillus plantarum (strain ATCC BAA-793 / NCIMB 8826 / WCFS1) (Lactobacillus plantarum).